Here is a 731-residue protein sequence, read N- to C-terminus: 1,4-alpha-glucan branching enzyme GlgB (731 aa).

Aspartate 412 acts as the Nucleophile in catalysis. Glutamate 465 acts as the Proton donor in catalysis.

This sequence belongs to the glycosyl hydrolase 13 family. GlgB subfamily. As to quaternary structure, monomer.

The catalysed reaction is Transfers a segment of a (1-&gt;4)-alpha-D-glucan chain to a primary hydroxy group in a similar glucan chain.. It participates in glycan biosynthesis; glycogen biosynthesis. In terms of biological role, catalyzes the formation of the alpha-1,6-glucosidic linkages in glycogen by scission of a 1,4-alpha-linked oligosaccharide from growing alpha-1,4-glucan chains and the subsequent attachment of the oligosaccharide to the alpha-1,6 position. The sequence is that of 1,4-alpha-glucan branching enzyme GlgB from Bordetella parapertussis (strain 12822 / ATCC BAA-587 / NCTC 13253).